The chain runs to 276 residues: Putative aliphatic sulfonates transport permease protein SsuC (276 aa).

7 helical membrane passes run 32 to 52 (GLLLPAVIIAIWQVIGGLGVV), 54 to 74 (ATVLPTPVTIVLTFKELILSG), 87 to 107 (AALGFLLGAGLGLMIGILAGF), 119 to 141 (LQMLRTVPHLAVTPLFILWFGFD), 146 to 168 (ILLIALGAFFPVYINTFNGIRGV), 199 to 219 (ILLGIRLSLGIAWLGLVVAEL), and 242 to 262 (VFAGIIIFAVVGKLTDSFVRL). The region spanning 80 to 260 (LQISIYRAAL…VVGKLTDSFV (181 aa)) is the ABC transmembrane type-1 domain.

It belongs to the binding-protein-dependent transport system permease family. CysTW subfamily.

The protein localises to the cell membrane. Part of a binding-protein-dependent transport system for aliphatic sulfonates. Probably responsible for the translocation of the substrate across the membrane. This Bacillus subtilis (strain 168) protein is Putative aliphatic sulfonates transport permease protein SsuC (ssuC).